A 588-amino-acid polypeptide reads, in one-letter code: Sulfite reductase [NADPH] hemoprotein beta-component (588 aa).

Cys443, Cys449, Cys488, and Cys492 together coordinate [4Fe-4S] cluster. Cys492 contacts siroheme.

The protein belongs to the nitrite and sulfite reductase 4Fe-4S domain family. In terms of assembly, alpha(8)-beta(8). The alpha component is a flavoprotein, the beta component is a hemoprotein. The cofactor is siroheme. [4Fe-4S] cluster serves as cofactor.

It catalyses the reaction hydrogen sulfide + 3 NADP(+) + 3 H2O = sulfite + 3 NADPH + 4 H(+). The protein operates within sulfur metabolism; hydrogen sulfide biosynthesis; hydrogen sulfide from sulfite (NADPH route): step 1/1. Its function is as follows. Component of the sulfite reductase complex that catalyzes the 6-electron reduction of sulfite to sulfide. This is one of several activities required for the biosynthesis of L-cysteine from sulfate. The chain is Sulfite reductase [NADPH] hemoprotein beta-component from Actinobacillus succinogenes (strain ATCC 55618 / DSM 22257 / CCUG 43843 / 130Z).